The following is a 1233-amino-acid chain: Structural maintenance of chromosomes protein 1A (1233 aa).

32–39 (GPNGSGKS) contacts ATP. Coiled-coil stretches lie at residues 104-124 (EYKI…LEKL) and 163-503 (ELAQ…KAEI). Positions 284 to 293 (IKEKDSELNQ) are enriched in basic and acidic residues. Disordered regions lie at residues 284–307 (IKEK…NTSH) and 350–369 (FEER…TLEE). A phosphoserine mark is found at Ser-358 and Ser-360. The SMC hinge domain occupies 515–629 (VYGRLIDLCQ…DNVEDARRIA (115 aa)). 2 positions are modified to N6-acetyllysine: Lys-648 and Lys-713. A coiled-coil region spans residues 660–935 (KAKARRWDEK…RHNLLQACKM (276 aa)). Positions 946–969 (TMDDISQEEGGSQGEESVSGSQRT) are disordered. Residues 953-967 (EEGGSQGEESVSGSQ) are compositionally biased toward low complexity. Phosphoserine occurs at positions 957, 962, 966, and 970. The stretch at 991–1068 (KDAQAEEEIK…FEQIKKERFD (78 aa)) forms a coiled coil. Lys-1037 carries the post-translational modification N6-acetyllysine.

It belongs to the SMC family. SMC1 subfamily. As to quaternary structure, forms a heterodimer with SMC3 in cohesin complexes. Cohesin complexes are composed of the SMC1 (SMC1A or meiosis-specific SMC1B) and SMC3 heterodimer attached via their SMC hinge domain, RAD21 which link them, and one STAG protein (STAG1, STAG2 or meiosis-specific STAG3), which interacts with RAD21. In germ cell cohesin complexes, SMC1A is mutually exclusive with SMC1B. Found in a complex with CDCA5, SMC3 and RAD21, PDS5A/SCC-112 and PDS5B/APRIN. Interacts with STAG3, NDC80, BRAC1, BRAT1 and RPGR. Found in a complex containing POLE and SMC3. The cohesin complex interacts with the cohesin loading complex subunits NIPBL/Scc2 (via HEAT repeats) and MAU2/Scc4. NIPBL directly contacts all members of the complex, RAD21, SMC1A/B, SMC3 and STAG1. Interacts with SYCP2. Post-translationally, phosphorylated upon ionizing radiation or DNA methylation. Phosphorylation of Ser-957 and Ser-966 activates it and is required for S-phase checkpoint activation. In terms of processing, ubiquitinated by the DCX(DCAF15) complex, leading to its degradation.

It is found in the nucleus. Its subcellular location is the chromosome. In terms of biological role, involved in chromosome cohesion during cell cycle and in DNA repair. Central component of cohesin complex. The cohesin complex is required for the cohesion of sister chromatids after DNA replication. The cohesin complex apparently forms a large proteinaceous ring within which sister chromatids can be trapped. At anaphase, the complex is cleaved and dissociates from chromatin, allowing sister chromatids to segregate. The cohesin complex may also play a role in spindle pole assembly during mitosis. Involved in DNA repair via its interaction with BRCA1 and its related phosphorylation by ATM, or via its phosphorylation by ATR. Works as a downstream effector both in the ATM/NBS1 branch and in the ATR/MSH2 branch of S-phase checkpoint. The sequence is that of Structural maintenance of chromosomes protein 1A (Smc1a) from Rattus norvegicus (Rat).